Consider the following 173-residue polypeptide: Orotate phosphoribosyltransferase (173 aa).

5-phospho-alpha-D-ribose 1-diphosphate-binding positions include Arg87, Lys88, Lys91, and 113–121 (EDIATTGQS). 2 residues coordinate orotate: Thr117 and Arg145.

Belongs to the purine/pyrimidine phosphoribosyltransferase family. PyrE subfamily. In terms of assembly, homodimer. The cofactor is Mg(2+).

The catalysed reaction is orotidine 5'-phosphate + diphosphate = orotate + 5-phospho-alpha-D-ribose 1-diphosphate. It participates in pyrimidine metabolism; UMP biosynthesis via de novo pathway; UMP from orotate: step 1/2. Its function is as follows. Catalyzes the transfer of a ribosyl phosphate group from 5-phosphoribose 1-diphosphate to orotate, leading to the formation of orotidine monophosphate (OMP). The protein is Orotate phosphoribosyltransferase of Natronomonas pharaonis (strain ATCC 35678 / DSM 2160 / CIP 103997 / JCM 8858 / NBRC 14720 / NCIMB 2260 / Gabara) (Halobacterium pharaonis).